Consider the following 208-residue polypeptide: MTNVLFIKANGLPAERSVSVALYEIFLTEYKKSHPDDNVTELDLFEADLPYYDVTMMSGLHKEAAGETLSPEEKRLADIANSYLDQFLAADKIVMAFPLWNFSIPAQFLTYLFYLNQAGKTFKYTANGPVGLVADKKIALLNARGGIYSDGPMQSFEMSLNYVKNVLAHFGISEPEMVIVEGHNAKPDQAKDIISAGAKEAVELAKIF.

17–19 (SVS) is a binding site for FMN.

It belongs to the azoreductase type 1 family. As to quaternary structure, homodimer. The cofactor is FMN.

The enzyme catalyses 2 a quinone + NADH + H(+) = 2 a 1,4-benzosemiquinone + NAD(+). It carries out the reaction N,N-dimethyl-1,4-phenylenediamine + anthranilate + 2 NAD(+) = 2-(4-dimethylaminophenyl)diazenylbenzoate + 2 NADH + 2 H(+). Functionally, quinone reductase that provides resistance to thiol-specific stress caused by electrophilic quinones. Its function is as follows. Also exhibits azoreductase activity. Catalyzes the reductive cleavage of the azo bond in aromatic azo compounds to the corresponding amines. The sequence is that of FMN-dependent NADH:quinone oxidoreductase 1 from Listeria monocytogenes serovar 1/2a (strain ATCC BAA-679 / EGD-e).